We begin with the raw amino-acid sequence, 85 residues long: Phosphoribosyl-AMP cyclohydrolase (85 aa).

Aspartate 48 provides a ligand contact to Mg(2+). Cysteine 49 contacts Zn(2+). Positions 50 and 52 each coordinate Mg(2+). Residues cysteine 65 and cysteine 72 each contribute to the Zn(2+) site.

This sequence belongs to the PRA-CH family. In terms of assembly, homodimer. Mg(2+) serves as cofactor. Zn(2+) is required as a cofactor.

Its subcellular location is the cytoplasm. It carries out the reaction 1-(5-phospho-beta-D-ribosyl)-5'-AMP + H2O = 1-(5-phospho-beta-D-ribosyl)-5-[(5-phospho-beta-D-ribosylamino)methylideneamino]imidazole-4-carboxamide. It functions in the pathway amino-acid biosynthesis; L-histidine biosynthesis; L-histidine from 5-phospho-alpha-D-ribose 1-diphosphate: step 3/9. Functionally, catalyzes the hydrolysis of the adenine ring of phosphoribosyl-AMP. The polypeptide is Phosphoribosyl-AMP cyclohydrolase (hisI) (Saccharolobus solfataricus (strain ATCC 35092 / DSM 1617 / JCM 11322 / P2) (Sulfolobus solfataricus)).